The following is a 472-amino-acid chain: Spliceosome-associated protein CWC27 homolog (472 aa).

Residue Ser2 is modified to N-acetylserine. The PPIase cyclophilin-type domain occupies 11-166 (TNGKVLLKTT…NPHKIKSCEV (156 aa)). 2 N-linked (GlcNAc...) asparagine glycosylation sites follow: Asn109 and Asn201. Residues 206–230 (SFGEEAEEEEEEVNRVSQSMKGKSK) adopt a coiled-coil conformation. 2 disordered regions span residues 206-386 (SFGE…DQTL) and 398-472 (QAIA…KERR). The span at 231-241 (SSHDLLKDDPH) shows a compositional bias: basic and acidic residues. The segment covering 257 to 268 (DLVDDGEDESAE) has biased composition (acidic residues). Basic and acidic residues-rich tracts occupy residues 269–286 (HDEY…ERIA), 304–347 (EVEK…KRSE), and 359–371 (EYRR…EALR). Residues 306 to 377 (EKKSVSRSEE…EALRKQQSKK (72 aa)) are a coiled coil. Residue Ser346 is modified to Phosphoserine. The segment covering 404-418 (PENDIPETEVEDDEG) has biased composition (acidic residues). 2 stretches are compositionally biased toward basic and acidic residues: residues 425-437 (QFED…KDAS) and 457-472 (RREE…KERR).

Belongs to the cyclophilin-type PPIase family. Part of the activated spliceosome B/catalytic step 1 spliceosome, one of the forms of the spliceosome which has a well-formed active site but still cannot catalyze the branching reaction and is composed at least of 52 proteins, the U2, U5 and U6 snRNAs and the pre-mRNA. Recruited during early steps of activated spliceosome B maturation, it is probably one of the first proteins released from this complex as he matures to the spliceosome C complex. Component of the minor spliceosome, which splices U12-type introns.

The protein resides in the nucleus. As part of the spliceosome, plays a role in pre-mRNA splicing. Probable inactive PPIase with no peptidyl-prolyl cis-trans isomerase activity. As a component of the minor spliceosome, involved in the splicing of U12-type introns in pre-mRNAs. The chain is Spliceosome-associated protein CWC27 homolog from Homo sapiens (Human).